Reading from the N-terminus, the 142-residue chain is Putative pre-16S rRNA nuclease (142 aa).

This sequence belongs to the YqgF nuclease family.

It is found in the cytoplasm. Could be a nuclease involved in processing of the 5'-end of pre-16S rRNA. The protein is Putative pre-16S rRNA nuclease of Malacoplasma penetrans (strain HF-2) (Mycoplasma penetrans).